The sequence spans 149 residues: Protegrin-3 (149 aa).

A signal peptide spans 1–29 (METQRASLCLGRWSLWLLLLALVVPSASA). Residues 30 to 130 (QALSYREAVL…DITCNEVQGV (101 aa)) constitute a propeptide that is removed on maturation. Positions 61–80 (DQPPKADEDPGTPKPVSFTV) are disordered. 4 cysteine pairs are disulfide-bonded: Cys85/Cys96, Cys107/Cys124, Cys136/Cys145, and Cys138/Cys143. The residue at position 148 (Arg148) is an Arginine amide.

This sequence belongs to the cathelicidin family.

Its subcellular location is the secreted. Functionally, microbicidal activity. Active against E.coli, Listeria monocytogenes and C.albicans, in vitro. The protein is Protegrin-3 (NPG3) of Sus scrofa (Pig).